The following is a 347-amino-acid chain: 4-hydroxy-2-oxovalerate aldolase 2 (347 aa).

The region spanning 7–259 is the Pyruvate carboxyltransferase domain; it reads VRITDTSLRD…KTGIDFFDIA (253 aa). 15 to 16 contacts substrate; that stretch reads RD. Asp-16 provides a ligand contact to Mn(2+). His-19 serves as the catalytic Proton acceptor. 2 residues coordinate substrate: Ser-169 and His-198. 2 residues coordinate Mn(2+): His-198 and His-200. Substrate is bound at residue Tyr-289.

The protein belongs to the 4-hydroxy-2-oxovalerate aldolase family.

The enzyme catalyses (S)-4-hydroxy-2-oxopentanoate = acetaldehyde + pyruvate. This Mycobacterium marinum (strain ATCC BAA-535 / M) protein is 4-hydroxy-2-oxovalerate aldolase 2.